Consider the following 677-residue polypeptide: Mitochondrial disaggregase (677 aa).

A mitochondrion-targeting transit peptide spans 1–28; the sequence is MLGSLVSKRTAPAPRLLLQLLRSPSLRS. Residues 92-126 form an autoinhibitory region; sequence PSPEDTLPGQDSWNGVLSRAGLGVWALATALVVHC. ANK repeat units lie at residues 133–162, 166–195, 235–265, and 268–297; these read SKDA…DVNA, LGWT…DPNL, KGCT…PLQR, and MGHT…EKQR. ATP is bound by residues H316, I318, S353, G354, I355, G356, K357, T358, E425, and N466. The regulatory; slows ATPase and disaggregase activities stretch occupies residues 477-505; it reads LQLRQEALEMSRNRIAENLGDVQISDKIT. Position 531 (R531) interacts with ATP. K559 carries the N6-acetyllysine modification. R590 contributes to the ATP binding site.

This sequence belongs to the ClpA/ClpB family. As to quaternary structure, homododecamer when substrate-bound; the homododecamer consists of 2 homohexamers stacked head-to-head via ANK repeat-mediated interactions. The active substrate-bound form is likely to exist in a dynamic equilibrium between homohexamers and homododecamers. Homotetradecamer in the unbound state which is remodeled upon substrate binding into the homododecamer. Interacts with PHB and PHB2. Interacts with MAVS; the interaction is enhanced by Sendai virus infection. Proteolytically cleaved by protease PARL. ATP-dependent protein disaggregase activity is stimulated by PARL-mediated cleavage of the N-terminal autoinhibitory peptide.

It localises to the mitochondrion intermembrane space. The enzyme catalyses ATP + H2O = ADP + phosphate + H(+). Its activity is regulated as follows. Disaggregase activity is inhibited by ADP. Its function is as follows. Functions as a regulatory ATPase and participates in secretion/protein trafficking process. Has ATP-dependent protein disaggregase activity and is required to maintain the solubility of key mitochondrial proteins. Involved in mitochondrial-mediated antiviral innate immunity, activates RIG-I-mediated signal transduction and production of IFNB1 and pro-inflammatory cytokine IL6. Plays a role in granulocyte differentiation. This is Mitochondrial disaggregase from Bos taurus (Bovine).